The sequence spans 388 residues: S-adenosylmethionine synthase (388 aa).

His-16 is a binding site for ATP. Asp-18 is a Mg(2+) binding site. Glu-44 contributes to the K(+) binding site. The L-methionine site is built by Glu-57 and Gln-100. The flexible loop stretch occupies residues 100 to 110 (QSPEIAQGVDR). ATP-binding positions include 165-167 (DAK), 231-232 (KF), Asp-240, 246-247 (RK), Ala-263, and Lys-267. Residue Asp-240 coordinates L-methionine. Residue Lys-271 coordinates L-methionine.

Belongs to the AdoMet synthase family. As to quaternary structure, homotetramer; dimer of dimers. The cofactor is Mg(2+). K(+) is required as a cofactor.

The protein localises to the cytoplasm. The catalysed reaction is L-methionine + ATP + H2O = S-adenosyl-L-methionine + phosphate + diphosphate. It functions in the pathway amino-acid biosynthesis; S-adenosyl-L-methionine biosynthesis; S-adenosyl-L-methionine from L-methionine: step 1/1. Its function is as follows. Catalyzes the formation of S-adenosylmethionine (AdoMet) from methionine and ATP. The overall synthetic reaction is composed of two sequential steps, AdoMet formation and the subsequent tripolyphosphate hydrolysis which occurs prior to release of AdoMet from the enzyme. The polypeptide is S-adenosylmethionine synthase (Psychrobacter arcticus (strain DSM 17307 / VKM B-2377 / 273-4)).